The chain runs to 480 residues: Aromatic-L-amino-acid decarboxylase (480 aa).

The residue at position 1 (Met-1) is an N-acetylmethionine. A run of 2 repeats spans residues 58–115 and 118–178. A 2 X approximate tandem repeats region spans residues 58–178; it reads GDIERIIMPG…AASPELTQAA (121 aa). Thr-82 is a substrate binding site. Pyridoxal 5'-phosphate is bound by residues Ala-148 and Ser-149. Substrate is bound at residue His-192. Residues Thr-246 and Asn-300 each contribute to the pyridoxal 5'-phosphate site. Position 303 is an N6-(pyridoxal phosphate)lysine (Lys-303).

It belongs to the group II decarboxylase family. As to quaternary structure, homodimer. Pyridoxal 5'-phosphate serves as cofactor.

The enzyme catalyses L-dopa + H(+) = dopamine + CO2. The catalysed reaction is 5-hydroxy-L-tryptophan + H(+) = serotonin + CO2. Its pathway is catecholamine biosynthesis; dopamine biosynthesis; dopamine from L-tyrosine: step 2/2. Functionally, catalyzes the decarboxylation of L-3,4-dihydroxyphenylalanine (DOPA) to dopamine and L-5-hydroxytryptophan to serotonin. The chain is Aromatic-L-amino-acid decarboxylase (DDC) from Cavia porcellus (Guinea pig).